A 314-amino-acid polypeptide reads, in one-letter code: MKMSFALTFRSAKGRWIANPSQPCSKASIGLFVPASPPLDPEKVKELQRFITLSKRLLVMTGAGISTESGIPDYRSEKVGLYARTDRRPIQHGDFVRSAPIRQRYWARNFVGWPQFSSHQPNPAHWALSTWEKLGKLYWLVTQNVDALHTKAGSRRLTELHGCMDRVLCLDCGEQTPRGVLQERFQVLNPTWSAEAHGLAPDGDVFLSEEQVRSFQVPTCVQCGGHLKPDVVFFGDTVNPDKVDFVHKRVKEADSLLVVGSSLQVYSGYRFILTAWEKKLPIAILNIGPTRSDDLACLKLNSRCGELLPLIDPC.

The N-terminal 28 residues, 1-28, are a transit peptide targeting the mitochondrion; sequence MKMSFALTFRSAKGRWIANPSQPCSKAS. The region spanning 37–314 is the Deacetylase sirtuin-type domain; it reads PPLDPEKVKE…GELLPLIDPC (278 aa). Residues 62–82 and 143–146 contribute to the NAD(+) site; these read GAGI…VGLY and QNVD. The active-site Proton acceptor is the H161. Residues C169, C172, C220, and C223 each contribute to the Zn(2+) site. NAD(+) contacts are provided by residues 260 to 262, 286 to 288, and C304; these read GSS and NIG.

The protein belongs to the sirtuin family. Class II subfamily. As to quaternary structure, interacts with GLUD1, IDE and SLC25A5. Interacts with DLAT and PDHX. Interacts with MCCC1 (via the biotin carboxylation domain). Interacts with PCCA and PC. The cofactor is Zn(2+). In terms of tissue distribution, detected in vascular smooth muscle and striated muscle. Detected in insulin-producing beta-cells in pancreas islets of Langerhans (at protein level). Widely expressed. Weakly expressed in leukocytes and fetal thymus.

It is found in the mitochondrion matrix. It carries out the reaction N(6)-[(R)-lipoyl]-L-lysyl-[protein] + NAD(+) + H2O = 2''-O-lipoyl-ADP-D-ribose + nicotinamide + L-lysyl-[protein]. The catalysed reaction is N(6)-biotinyl-L-lysyl-[protein] + NAD(+) + H2O = 2''-O-biotinyl-ADP-D-ribose + nicotinamide + L-lysyl-[protein]. The enzyme catalyses N(6)-acetyl-L-lysyl-[protein] + NAD(+) + H2O = 2''-O-acetyl-ADP-D-ribose + nicotinamide + L-lysyl-[protein]. It catalyses the reaction L-cysteinyl-[protein] + NAD(+) = S-(ADP-D-ribosyl)-L-cysteinyl-[protein] + nicotinamide + H(+). In terms of biological role, acts as a NAD-dependent protein lipoamidase, biotinylase, deacetylase and ADP-ribosyl transferase. Catalyzes more efficiently removal of lipoyl- and biotinyl- than acetyl-lysine modifications. Inhibits the pyruvate dehydrogenase complex (PDH) activity via the enzymatic hydrolysis of the lipoamide cofactor from the E2 component, DLAT, in a phosphorylation-independent manner. Catalyzes the transfer of ADP-ribosyl groups onto target proteins, including mitochondrial GLUD1, inhibiting GLUD1 enzyme activity. Acts as a negative regulator of mitochondrial glutamine metabolism by mediating mono ADP-ribosylation of GLUD1: expressed in response to DNA damage and negatively regulates anaplerosis by inhibiting GLUD1, leading to block metabolism of glutamine into tricarboxylic acid cycle and promoting cell cycle arrest. In response to mTORC1 signal, SIRT4 expression is repressed, promoting anaplerosis and cell proliferation. Acts as a tumor suppressor. Also acts as a NAD-dependent protein deacetylase: mediates deacetylation of 'Lys-471' of MLYCD, inhibiting its activity, thereby acting as a regulator of lipid homeostasis. Does not seem to deacetylate PC. Controls fatty acid oxidation by inhibiting PPARA transcriptional activation. Impairs SIRT1-PPARA interaction probably through the regulation of NAD(+) levels. Down-regulates insulin secretion. This chain is NAD-dependent protein lipoamidase sirtuin-4, mitochondrial, found in Homo sapiens (Human).